The chain runs to 331 residues: GTP 3',8-cyclase (331 aa).

Positions 6 to 231 (PFGRTISYLR…TDIPFKTGGP (226 aa)) constitute a Radical SAM core domain. GTP is bound at residue Arg-15. Cys-22 and Cys-26 together coordinate [4Fe-4S] cluster. Residue Tyr-28 participates in S-adenosyl-L-methionine binding. A [4Fe-4S] cluster-binding site is contributed by Cys-29. Arg-64 is a binding site for GTP. Gly-68 contributes to the S-adenosyl-L-methionine binding site. GTP is bound at residue Thr-98. Residue Ser-122 coordinates S-adenosyl-L-methionine. Position 158 (Lys-158) interacts with GTP. Met-192 serves as a coordination point for S-adenosyl-L-methionine. 2 residues coordinate [4Fe-4S] cluster: Cys-255 and Cys-258. GTP is bound at residue 260–262 (RVR). Cys-272 lines the [4Fe-4S] cluster pocket.

Belongs to the radical SAM superfamily. MoaA family. As to quaternary structure, monomer and homodimer. [4Fe-4S] cluster is required as a cofactor.

The catalysed reaction is GTP + AH2 + S-adenosyl-L-methionine = (8S)-3',8-cyclo-7,8-dihydroguanosine 5'-triphosphate + 5'-deoxyadenosine + L-methionine + A + H(+). The protein operates within cofactor biosynthesis; molybdopterin biosynthesis. Catalyzes the cyclization of GTP to (8S)-3',8-cyclo-7,8-dihydroguanosine 5'-triphosphate. This chain is GTP 3',8-cyclase, found in Mesorhizobium japonicum (strain LMG 29417 / CECT 9101 / MAFF 303099) (Mesorhizobium loti (strain MAFF 303099)).